Here is a 112-residue protein sequence, read N- to C-terminus: Evasin P1095 (112 aa).

The first 23 residues, 1–23, serve as a signal peptide directing secretion; that stretch reads MELNAFTILQIAVFIAVGYHANT. 3 disulfides stabilise this stretch: cysteine 48–cysteine 66, cysteine 52–cysteine 68, and cysteine 62–cysteine 79. N-linked (GlcNAc...) asparagine glycosylation occurs at asparagine 51. Positions 89–112 are disordered; that stretch reads GDPNDDPKINEATPQTQIFEKKRK.

The protein resides in the secreted. Functionally, salivary chemokine-binding protein which binds to host chemokine CXCL8. This Ixodes ricinus (Common tick) protein is Evasin P1095.